The chain runs to 171 residues: 3-hydroxydecanoyl-[acyl-carrier-protein] dehydratase (171 aa).

Residue His-70 is part of the active site.

Belongs to the thioester dehydratase family. FabA subfamily. Homodimer.

It is found in the cytoplasm. The catalysed reaction is a (3R)-hydroxyacyl-[ACP] = a (2E)-enoyl-[ACP] + H2O. The enzyme catalyses (3R)-hydroxydecanoyl-[ACP] = (2E)-decenoyl-[ACP] + H2O. It catalyses the reaction (2E)-decenoyl-[ACP] = (3Z)-decenoyl-[ACP]. It participates in lipid metabolism; fatty acid biosynthesis. Its function is as follows. Necessary for the introduction of cis unsaturation into fatty acids. Catalyzes the dehydration of (3R)-3-hydroxydecanoyl-ACP to E-(2)-decenoyl-ACP and then its isomerization to Z-(3)-decenoyl-ACP. Can catalyze the dehydratase reaction for beta-hydroxyacyl-ACPs with saturated chain lengths up to 16:0, being most active on intermediate chain length. The polypeptide is 3-hydroxydecanoyl-[acyl-carrier-protein] dehydratase (Methylococcus capsulatus (strain ATCC 33009 / NCIMB 11132 / Bath)).